Here is a 1690-residue protein sequence, read N- to C-terminus: rRNA biogenesis protein rrp5 (1690 aa).

Disordered stretches follow at residues 1 to 42 and 59 to 90; these read MAGN…GASS and FMES…ELDN. Residues 11–32 show a composition bias toward polar residues; the sequence is ASEGSDSQGNERISSLSANEAT. Basic residues predominate over residues 72–83; that stretch reads KTRPKKKGSKKS. S1 motif domains are found at residues 109 to 209, 226 to 289, 306 to 376, 398 to 473, 490 to 559, 579 to 648, 666 to 739, 761 to 830, 866 to 942, 973 to 1044, 1053 to 1122, 1147 to 1216, and 1236 to 1307; these read GSLI…LSLK, GSMI…LTAT, GDYI…VSFL, GFIV…LSFQ, GQFV…LTLK, GTQT…VGCR, GSVL…LSLK, GIKY…MSFK, GKIT…ISHR, GDEV…IGPL, GSRL…LSAR, GDIC…MSLK, and GSNL…LGLK. The interval 1313 to 1424 is disordered; sequence SDSDISMSDN…EEKDLDEIPS (112 aa). Acidic residues-rich tracts occupy residues 1348–1367, 1390–1400, and 1412–1421; these read QSEE…EEEP, DTEDSEDEEDE, and FDDEEKDLDE. The residue at position 1391 (Thr-1391) is a Phosphothreonine. Residue Ser-1394 is modified to Phosphoserine. 3 HAT repeats span residues 1420–1452, 1526–1558, and 1596–1628; these read DEIP…YHLN, GKVD…FLLN, and GDPE…MEMK. Residues Ser-1684 and Ser-1686 each carry the phosphoserine modification.

As to quaternary structure, component of the ribosomal small subunit (SSU) processome.

Its subcellular location is the nucleus. It localises to the nucleolus. Its function is as follows. Involved in the biogenesis of rRNA. Required for the formation of 18S and 5.8S rRNA. In Schizosaccharomyces pombe (strain 972 / ATCC 24843) (Fission yeast), this protein is rRNA biogenesis protein rrp5.